A 209-amino-acid polypeptide reads, in one-letter code: Thymidine kinase (209 aa).

Residues 25-32 and 103-106 contribute to the ATP site; these read GCMFAGKT and DEVQ. Residue E104 is the Proton acceptor of the active site. Zn(2+) is bound by residues C160, C163, C198, and C201.

This sequence belongs to the thymidine kinase family. As to quaternary structure, homotetramer.

It localises to the cytoplasm. It catalyses the reaction thymidine + ATP = dTMP + ADP + H(+). This Mycoplasma capricolum subsp. capricolum (strain California kid / ATCC 27343 / NCTC 10154) protein is Thymidine kinase.